The sequence spans 485 residues: Kynureninase 1 (485 aa).

Residues Leu-155, Thr-156, 183 to 186, Asp-267, His-270, and Tyr-292 each bind pyridoxal 5'-phosphate; that span reads FPSD. An N6-(pyridoxal phosphate)lysine modification is found at Lys-293. Pyridoxal 5'-phosphate contacts are provided by Trp-330 and Asn-358.

It belongs to the kynureninase family. Homodimer. Pyridoxal 5'-phosphate is required as a cofactor.

It localises to the cytoplasm. The catalysed reaction is L-kynurenine + H2O = anthranilate + L-alanine + H(+). It catalyses the reaction 3-hydroxy-L-kynurenine + H2O = 3-hydroxyanthranilate + L-alanine + H(+). The protein operates within amino-acid degradation; L-kynurenine degradation; L-alanine and anthranilate from L-kynurenine: step 1/1. Its pathway is cofactor biosynthesis; NAD(+) biosynthesis; quinolinate from L-kynurenine: step 2/3. In terms of biological role, catalyzes the cleavage of L-kynurenine (L-Kyn) and L-3-hydroxykynurenine (L-3OHKyn) into anthranilic acid (AA) and 3-hydroxyanthranilic acid (3-OHAA), respectively. The chain is Kynureninase 1 (kyn-1) from Neurospora crassa (strain ATCC 24698 / 74-OR23-1A / CBS 708.71 / DSM 1257 / FGSC 987).